Reading from the N-terminus, the 488-residue chain is Glutamyl-tRNA(Gln) amidotransferase subunit A, mitochondrial (488 aa).

Residues Lys62 and Ser140 each act as charge relay system in the active site. Residue Ser164 is the Acyl-ester intermediate of the active site. The disordered stretch occupies residues 205 to 228; it reads GHDDNDPTSITPQTRERIQDRLSR. The segment covering 218 to 227 has biased composition (basic and acidic residues); the sequence is TRERIQDRLS.

Belongs to the amidase family. GatA subfamily. In terms of assembly, subunit of the heterotrimeric GatCAB amidotransferase (AdT) complex, composed of A, B and C subunits.

It localises to the mitochondrion. It catalyses the reaction L-glutamyl-tRNA(Gln) + L-glutamine + ATP + H2O = L-glutaminyl-tRNA(Gln) + L-glutamate + ADP + phosphate + H(+). Its function is as follows. Allows the formation of correctly charged Gln-tRNA(Gln) through the transamidation of misacylated Glu-tRNA(Gln) in the mitochondria. The reaction takes place in the presence of glutamine and ATP through an activated gamma-phospho-Glu-tRNA(Gln). The polypeptide is Glutamyl-tRNA(Gln) amidotransferase subunit A, mitochondrial (Tuber melanosporum (strain Mel28) (Perigord black truffle)).